A 140-amino-acid polypeptide reads, in one-letter code: Proline-rich nuclear receptor coactivator 2 (140 aa).

The tract at residues 1 to 81 is disordered; it reads MGGGERYNIP…NSNWNAGLSS (81 aa). Polar residues-rich tracts occupy residues 11 to 38 and 59 to 81; these read DPQSRNASKNQEQQNRQKSKDQNSSQTK and AMQNGGKTKSLSNNSNWNAGLSS. The SH3-binding motif lies at 100-106; it reads SEPPSPS.

The protein belongs to the PNRC family. PNRC2 subfamily. In terms of assembly, interacts with UPF1/RENT1; preferentially interacts with hyperphosphorylated form. Interacts with DCP1A. Interacts with many nuclear receptors including ESR1, ESRRA, ESRRG, NR3C1/GR, NR5A1, PGR, TR, RAR and RXR. In terms of tissue distribution, strong expression is detected in lung, spleen, ovary, thymus, and colon.

It localises to the nucleus. It is found in the cytoplasm. The protein localises to the P-body. Involved in nonsense-mediated mRNA decay (NMD) by acting as a bridge between the mRNA decapping complex and the NMD machinery. May act by targeting the NMD machinery to the P-body and recruiting the decapping machinery to aberrant mRNAs. Required for UPF1/RENT1 localization to the P-body. Plays a role in glucocorticoid receptor-mediated mRNA degradation by interacting with the glucocorticoid receptor NR3C1 in a ligand-dependent manner when it is bound to the 5' UTR of target mRNAs and recruiting the RNA helicase UPF1 and the mRNA-decapping enzyme DCP1A, leading to RNA decay. Also acts as a nuclear receptor coactivator. May play a role in controlling the energy balance between energy storage and energy expenditure. This is Proline-rich nuclear receptor coactivator 2 (Pnrc2) from Mus musculus (Mouse).